Consider the following 546-residue polypeptide: MFS-type transporter GME11371 (546 aa).

The next 7 helical transmembrane spans lie at 39–59, 77–96, 107–127, 137–157, 167–187, 195–215, and 240–260; these read LTYL…DLTI, IGWY…SSWG, MFLL…AAPT, ITGI…AFAV, GGLA…GGVL, WCFY…FLFF, and FPGF…LLWG. The N-linked (GlcNAc...) asparagine glycan is linked to Asn-267. Transmembrane regions (helical) follow at residues 270–290, 307–327, 349–369, 370–390, 402–422, 433–453, and 509–529; these read DVIG…VVEW, VVLF…VLVY, LPYI…ISAT, GYFT…AGLI, WIGY…PPIL, VAAT…FMVS, and ISFA…IFMP.

The protein belongs to the major facilitator superfamily.

The protein resides in the cell membrane. It functions in the pathway secondary metabolite biosynthesis. MFS-type transporter; part of the gene cluster that mediates the biosynthesis of dibenzodioxocinones such as pestalotiollide B, a novel class of inhibitors against cholesterol ester transfer protein (CEPT). essential for dibenzodioxocinones biosynthesis and may be involved in the secretion of the cluster products. In Pestalotiopsis microspora, this protein is MFS-type transporter GME11371.